A 95-amino-acid polypeptide reads, in one-letter code: Aspartyl/glutamyl-tRNA(Asn/Gln) amidotransferase subunit C (95 aa).

Belongs to the GatC family. Heterotrimer of A, B and C subunits.

The catalysed reaction is L-glutamyl-tRNA(Gln) + L-glutamine + ATP + H2O = L-glutaminyl-tRNA(Gln) + L-glutamate + ADP + phosphate + H(+). The enzyme catalyses L-aspartyl-tRNA(Asn) + L-glutamine + ATP + H2O = L-asparaginyl-tRNA(Asn) + L-glutamate + ADP + phosphate + 2 H(+). Allows the formation of correctly charged Asn-tRNA(Asn) or Gln-tRNA(Gln) through the transamidation of misacylated Asp-tRNA(Asn) or Glu-tRNA(Gln) in organisms which lack either or both of asparaginyl-tRNA or glutaminyl-tRNA synthetases. The reaction takes place in the presence of glutamine and ATP through an activated phospho-Asp-tRNA(Asn) or phospho-Glu-tRNA(Gln). This is Aspartyl/glutamyl-tRNA(Asn/Gln) amidotransferase subunit C from Pseudomonas entomophila (strain L48).